Here is a 741-residue protein sequence, read N- to C-terminus: Zinc finger protein 425 (741 aa).

The 69-residue stretch at 1-69 (DDVALYFSGQ…EQGCLDKTRR (69 aa)) folds into the KRAB domain. 2 disordered regions span residues 67–86 (TRRTTSPPTDEQLDMKDTGK) and 128–169 (RRDT…TPGR). Positions 132–151 (FQSPSLQETEIPNKKVSITA) are enriched in polar residues. Residues 153-168 (DPDKKDLRHKPRETPG) show a composition bias toward basic and acidic residues. C2H2-type zinc fingers lie at residues 179–201 (YSCYVCRKVFQVRRDLLKHKRSH), 235–257 (FQCSECEKSYFLKGSLVTHQVVH), 263–285 (YPCPECDKTFRYRANLKKHLCLH), 291–313 (FCCGECGRAFVQQCELTEHLRLH), 319–341 (FQCPQCDRCFRLKRGMKVHLSQH), 347–369 (FHCPECGRSFSRKAALKTHQRTH), 375–397 (FSCDECGRKFIYKIKLDEHIRVH), 403–425 (FSCPECNKSFRLKRSLKAHGLQH), 431–453 (FQCPECSRGFFWRNAMRAHQRLH), 459–481 (FPCAECGKRFTRPSKLACHTRVH), 487–509 (FPCGECKKTFSQQSRLTQHLKVH), 515–537 (FSCAECGRSFRRRAHLTEHTRLH), 543–565 (FQCPECDKSFSWKASMKFHQRMH), 571–593 (FACSECGKTYTHQSQLTEHLRLH), 599–621 (YQCPECQKTFRLKGNLKSHLLQH), 627–649 (FSCVMCGKSFTQQYRLTEHIRVH), 655–677 (FQCPECDKSYCIRGSLKVHLYTH), 683–705 (FQCPECGKGFLQKRSLKAHLCLH), and 711–733 (FSCDECGRSFTYVGALKTHIAVH).

This sequence belongs to the krueppel C2H2-type zinc-finger protein family.

It localises to the nucleus. Its subcellular location is the cytoplasm. Functionally, acts as a transcriptional repressor. In Macaca fascicularis (Crab-eating macaque), this protein is Zinc finger protein 425 (ZNF425).